The following is a 220-amino-acid chain: UPF0319 protein YccT (220 aa).

Positions 1–20 are cleaved as a signal peptide; the sequence is MKTGIVTTLIALCLPVSVFA.

This sequence belongs to the UPF0319 family.

The sequence is that of UPF0319 protein YccT from Escherichia coli O139:H28 (strain E24377A / ETEC).